A 197-amino-acid chain; its full sequence is Small ribosomal subunit protein uS4B (197 aa).

The S4 RNA-binding domain maps to 88–150; the sequence is SRLDNMVYRM…SRKTEMFVNN (63 aa).

This sequence belongs to the universal ribosomal protein uS4 family. In terms of assembly, part of the 30S ribosomal subunit. Contacts protein S5. The interaction surface between S4 and S5 is involved in control of translational fidelity.

Functionally, one of the primary rRNA binding proteins, it binds directly to 16S rRNA where it nucleates assembly of the body of the 30S subunit. With S5 and S12 plays an important role in translational accuracy. In Clostridium perfringens (strain 13 / Type A), this protein is Small ribosomal subunit protein uS4B (rpsD2).